Here is a 388-residue protein sequence, read N- to C-terminus: Isocitrate dehydrogenase [NAD] subunit 1, mitochondrial (388 aa).

The transit peptide at 1–35 (MFSLRTAQPAQSLFRAATNTYSTSLPRSAIAARSF) directs the protein to the mitochondrion. 3 residues coordinate substrate: R137, R168, and D255. D255 provides a ligand contact to Mg(2+).

Belongs to the isocitrate and isopropylmalate dehydrogenases family. As to quaternary structure, octamer of two non-identical subunits IDH1 and IDH2. Mg(2+) serves as cofactor. Requires Mn(2+) as cofactor.

It is found in the mitochondrion. The enzyme catalyses D-threo-isocitrate + NAD(+) = 2-oxoglutarate + CO2 + NADH. Functionally, performs an essential role in the oxidative function of the citric acid cycle. The chain is Isocitrate dehydrogenase [NAD] subunit 1, mitochondrial (IDH1) from Ajellomyces capsulatus (Darling's disease fungus).